A 571-amino-acid polypeptide reads, in one-letter code: Proline--tRNA ligase (571 aa).

It belongs to the class-II aminoacyl-tRNA synthetase family. ProS type 1 subfamily. Homodimer.

It localises to the cytoplasm. The catalysed reaction is tRNA(Pro) + L-proline + ATP = L-prolyl-tRNA(Pro) + AMP + diphosphate. Catalyzes the attachment of proline to tRNA(Pro) in a two-step reaction: proline is first activated by ATP to form Pro-AMP and then transferred to the acceptor end of tRNA(Pro). As ProRS can inadvertently accommodate and process non-cognate amino acids such as alanine and cysteine, to avoid such errors it has two additional distinct editing activities against alanine. One activity is designated as 'pretransfer' editing and involves the tRNA(Pro)-independent hydrolysis of activated Ala-AMP. The other activity is designated 'posttransfer' editing and involves deacylation of mischarged Ala-tRNA(Pro). The misacylated Cys-tRNA(Pro) is not edited by ProRS. The protein is Proline--tRNA ligase of Aliivibrio fischeri (strain MJ11) (Vibrio fischeri).